The chain runs to 186 residues: Casparian strip membrane protein 3 (186 aa).

Topologically, residues 1-26 are cytoplasmic; it reads MKAGALELGEGSKTSIPRGGVNRGIS. A helical transmembrane segment spans residues 27 to 47; the sequence is ILDFILRLITIIGTLGSAIAM. Over 48–74 the chain is Extracellular; sequence GTTNETLPFFTQFTQFRAEYDDLPTFT. The N-linked (GlcNAc...) asparagine glycan is linked to Asn-51. Residues 75–95 form a helical membrane-spanning segment; sequence FFVIANSIVSGYLVLSLPMSI. Residues 96-107 lie on the Cytoplasmic side of the membrane; the sequence is LHIVRSGARASR. A helical membrane pass occupies residues 108 to 128; it reads IVLIFFDTAMLALLTAAASAA. Over 129–161 the chain is Extracellular; the sequence is SAIVYLAHKGNAQANWFAICQQFKSFCERISGS. The helical transmembrane segment at 162-182 threads the bilayer; that stretch reads LIGSFGGIILFILLVLLSAVA. Over 183–186 the chain is Cytoplasmic; that stretch reads LSRC.

It belongs to the Casparian strip membrane proteins (CASP) family. In terms of assembly, homodimer and heterodimers.

It localises to the cell membrane. Functionally, regulates membrane-cell wall junctions and localized cell wall deposition. Required for establishment of the Casparian strip membrane domain (CSD) and the subsequent formation of Casparian strips, a cell wall modification of the root endodermis that determines an apoplastic barrier between the intraorganismal apoplasm and the extraorganismal apoplasm and prevents lateral diffusion. This is Casparian strip membrane protein 3 from Vitis vinifera (Grape).